The following is a 211-amino-acid chain: ATP phosphoribosyltransferase (211 aa).

It belongs to the ATP phosphoribosyltransferase family. Short subfamily. Heteromultimer composed of HisG and HisZ subunits.

It is found in the cytoplasm. It catalyses the reaction 1-(5-phospho-beta-D-ribosyl)-ATP + diphosphate = 5-phospho-alpha-D-ribose 1-diphosphate + ATP. The protein operates within amino-acid biosynthesis; L-histidine biosynthesis; L-histidine from 5-phospho-alpha-D-ribose 1-diphosphate: step 1/9. Functionally, catalyzes the condensation of ATP and 5-phosphoribose 1-diphosphate to form N'-(5'-phosphoribosyl)-ATP (PR-ATP). Has a crucial role in the pathway because the rate of histidine biosynthesis seems to be controlled primarily by regulation of HisG enzymatic activity. This Bacillus cereus (strain AH187) protein is ATP phosphoribosyltransferase.